Consider the following 43-residue polypeptide: Lanthionine-containing peptide SapB (43 aa).

A signal peptide spans 1–21 (MALLDLQAMDTPAEDSFGELA). 2 cross-links (lanthionine (Ser-Cys)) span residues 24-31 (SQVSLLVC) and 34-41 (SSLSVVLC). Residues Ser-27 and Ser-37 each carry the 2,3-didehydroalanine (Ser) modification.

It belongs to the lanthionine-containing morphogen protein family. Post-translationally, maturation involves the enzymatic conversion of Ser into dehydrated AA and the formation of thioether bonds with cysteine. This is followed by membrane translocation and cleavage of the modified precursor.

In terms of biological role, lanthionine-containing peptide devoid of antibiotic properties, involved in the formation of aerial mycelium. Suggested to self-assemble at air-water interfaces, thus providing a film of surfactant through which nascent aerial hyphae can emerge. The aerial hyphae differentiate further into spores. This chain is Lanthionine-containing peptide SapB (ramS), found in Streptomyces griseus subsp. griseus (strain JCM 4626 / CBS 651.72 / NBRC 13350 / KCC S-0626 / ISP 5235).